Consider the following 556-residue polypeptide: 2-succinyl-5-enolpyruvyl-6-hydroxy-3-cyclohexene-1-carboxylate synthase (556 aa).

It belongs to the TPP enzyme family. MenD subfamily. As to quaternary structure, homodimer. Mg(2+) serves as cofactor. It depends on Mn(2+) as a cofactor. Thiamine diphosphate is required as a cofactor.

The enzyme catalyses isochorismate + 2-oxoglutarate + H(+) = 5-enolpyruvoyl-6-hydroxy-2-succinyl-cyclohex-3-ene-1-carboxylate + CO2. Its pathway is quinol/quinone metabolism; 1,4-dihydroxy-2-naphthoate biosynthesis; 1,4-dihydroxy-2-naphthoate from chorismate: step 2/7. The protein operates within quinol/quinone metabolism; menaquinone biosynthesis. Its function is as follows. Catalyzes the thiamine diphosphate-dependent decarboxylation of 2-oxoglutarate and the subsequent addition of the resulting succinic semialdehyde-thiamine pyrophosphate anion to isochorismate to yield 2-succinyl-5-enolpyruvyl-6-hydroxy-3-cyclohexene-1-carboxylate (SEPHCHC). This is 2-succinyl-5-enolpyruvyl-6-hydroxy-3-cyclohexene-1-carboxylate synthase from Escherichia coli O7:K1 (strain IAI39 / ExPEC).